The following is a 355-amino-acid chain: Serine endoprotease DegS (355 aa).

Over 1 to 4 (MFVK) the chain is Cytoplasmic. A helical membrane pass occupies residues 5-27 (LLRSVAIGLIVGAILLVAMPSLR). Topologically, residues 28–355 (SLNPLSTPQF…VTIQEYPATN (328 aa)) are periplasmic. Residues His96 and Asp126 each act as charge relay system in the active site. Residue Thr184 participates in substrate binding. Catalysis depends on Ser201, which acts as the Charge relay system. A substrate-binding site is contributed by 259 to 264 (IGIGGR). The region spanning 281-326 (GIVVNEVSPDGPAANAGIQVNDLIISVDNKPAISALETMDQVAEIR) is the PDZ domain. Tyr351 is a binding site for substrate.

Belongs to the peptidase S1C family. In terms of assembly, homotrimer.

Its subcellular location is the cell inner membrane. It catalyses the reaction Acts on substrates that are at least partially unfolded. The cleavage site P1 residue is normally between a pair of hydrophobic residues, such as Val-|-Val.. With respect to regulation, allosterically activated by the C-terminus of exposed OMP peptides (consensus Tyr-X-Phe-COOH); cleavage only occurs in the presence of peptides. Inhibited when RseB is bound to RseA. In terms of biological role, a site-1 protease (S1P) that cleaves the peptide bond between 'Val-148' and 'Ser-149' in RseA. Part of a regulated intramembrane proteolysis (RIP) cascade. When heat shock or other environmental stresses disrupt protein folding in the periplasm, DegS senses the accumulation of unassembled outer membrane porins (OMP) and then initiates RseA (anti sigma-E factor) degradation by cleaving its periplasmic domain, making it a substrate for subsequent cleavage by RseP. This cascade ultimately leads to the sigma-E-driven expression of a variety of factors dealing with folding stress in the periplasm and OMP assembly. Required for basal and stress-induced degradation of RseA. In Escherichia coli O157:H7, this protein is Serine endoprotease DegS (degS).